Consider the following 333-residue polypeptide: MLLVALALLAFLFPAGDTQNALQWPTSVHGIQISSFFNHTMAQSRCSGWLGNMELGSFDSDTGTIIFKKPWSKANFSNEEVLELEELFQVYMLGFIREVQERMSDFQMEYPFEIQGIAGCELISGGTIDFFLRGALEGLDFLSIKNSTCWPAPEGGTKAKKFCTLILQYKGIWDIMENLLTKTCPRYVLSVLESGKPDIQKQVKPDAWLSQGPSPGPGLLQLVCHVSGFYPKPVWVMWMRGEQEQPETQKGDVLPNADETWYLQVTLDVAAEEAAGLSCRVKHSSLEGQDIILYWGHSISIGWIILAVLVPCLIVLVLFVLWFYRRWSYEDIL.

Residues 1 to 17 (MLLVALALLAFLFPAGD) form the signal peptide. Over 18-302 (TQNALQWPTS…LYWGHSISIG (285 aa)) the chain is Extracellular. 3 N-linked (GlcNAc...) asparagine glycosylation sites follow: Asn38, Asn75, and Asn146. Disulfide bonds link Cys120–Cys184, Cys149–Cys163, and Cys224–Cys279. The region spanning 197–295 (PDIQKQVKPD…LEGQDIILYW (99 aa)) is the Ig-like domain. The chain crosses the membrane as a helical span at residues 303-323 (WIILAVLVPCLIVLVLFVLWF). The Cytoplasmic segment spans residues 324 to 333 (YRRWSYEDIL). The Internalization signal signature appears at 329 to 332 (YEDI).

As to quaternary structure, heterodimer with B2M (beta-2-microglobulin). Interacts with saposin C.

It localises to the cell membrane. The protein localises to the endosome membrane. The protein resides in the lysosome membrane. Antigen-presenting protein that binds self and non-self lipid and glycolipid antigens and presents them to T-cell receptors on natural killer T-cells. In Cavia porcellus (Guinea pig), this protein is T-cell surface glycoprotein CD1b1 (CD1B1).